The following is a 198-amino-acid chain: FMN-dependent NADH:quinone oxidoreductase 6 (198 aa).

FMN is bound at residue 96 to 99 (MYNF).

Belongs to the azoreductase type 1 family. As to quaternary structure, homodimer. It depends on FMN as a cofactor.

It carries out the reaction 2 a quinone + NADH + H(+) = 2 a 1,4-benzosemiquinone + NAD(+). It catalyses the reaction N,N-dimethyl-1,4-phenylenediamine + anthranilate + 2 NAD(+) = 2-(4-dimethylaminophenyl)diazenylbenzoate + 2 NADH + 2 H(+). Its function is as follows. Quinone reductase that provides resistance to thiol-specific stress caused by electrophilic quinones. Functionally, also exhibits azoreductase activity. Catalyzes the reductive cleavage of the azo bond in aromatic azo compounds to the corresponding amines. This is FMN-dependent NADH:quinone oxidoreductase 6 from Burkholderia lata (strain ATCC 17760 / DSM 23089 / LMG 22485 / NCIMB 9086 / R18194 / 383).